The primary structure comprises 312 residues: Acetyl-coenzyme A carboxylase carboxyl transferase subunit alpha (312 aa).

Positions 32–286 constitute a CoA carboxyltransferase C-terminal domain; that stretch reads LLEERLARLR…KEALLKALEE (255 aa).

This sequence belongs to the AccA family. In terms of assembly, acetyl-CoA carboxylase is a heterohexamer composed of biotin carboxyl carrier protein (AccB), biotin carboxylase (AccC) and two subunits each of ACCase subunit alpha (AccA) and ACCase subunit beta (AccD).

The protein resides in the cytoplasm. The catalysed reaction is N(6)-carboxybiotinyl-L-lysyl-[protein] + acetyl-CoA = N(6)-biotinyl-L-lysyl-[protein] + malonyl-CoA. It functions in the pathway lipid metabolism; malonyl-CoA biosynthesis; malonyl-CoA from acetyl-CoA: step 1/1. In terms of biological role, component of the acetyl coenzyme A carboxylase (ACC) complex. First, biotin carboxylase catalyzes the carboxylation of biotin on its carrier protein (BCCP) and then the CO(2) group is transferred by the carboxyltransferase to acetyl-CoA to form malonyl-CoA. This Thermus thermophilus (strain ATCC BAA-163 / DSM 7039 / HB27) protein is Acetyl-coenzyme A carboxylase carboxyl transferase subunit alpha.